Reading from the N-terminus, the 329-residue chain is DNA-directed RNA polymerase subunit alpha (329 aa).

The tract at residues 1–235 (MQGSVTEFLK…EQLEAFVDLR (235 aa)) is alpha N-terminal domain (alpha-NTD). The interval 249-329 (FDPILLRPVD…DWPPASIADE (81 aa)) is alpha C-terminal domain (alpha-CTD).

It belongs to the RNA polymerase alpha chain family. Homodimer. The RNAP catalytic core consists of 2 alpha, 1 beta, 1 beta' and 1 omega subunit. When a sigma factor is associated with the core the holoenzyme is formed, which can initiate transcription.

The catalysed reaction is RNA(n) + a ribonucleoside 5'-triphosphate = RNA(n+1) + diphosphate. DNA-dependent RNA polymerase catalyzes the transcription of DNA into RNA using the four ribonucleoside triphosphates as substrates. The protein is DNA-directed RNA polymerase subunit alpha of Salmonella choleraesuis (strain SC-B67).